Here is a 466-residue protein sequence, read N- to C-terminus: Cysteine--tRNA ligase (466 aa).

C27 contacts Zn(2+). Positions 29-39 (PTVYDDAHLGH) match the 'HIGH' region motif. Positions 208, 238, and 242 each coordinate Zn(2+). A 'KMSKS' region motif is present at residues 270 to 274 (KMSKS). K273 contributes to the ATP binding site.

It belongs to the class-I aminoacyl-tRNA synthetase family. As to quaternary structure, monomer. Zn(2+) is required as a cofactor.

It is found in the cytoplasm. It carries out the reaction tRNA(Cys) + L-cysteine + ATP = L-cysteinyl-tRNA(Cys) + AMP + diphosphate. The polypeptide is Cysteine--tRNA ligase (Sulfurimonas denitrificans (strain ATCC 33889 / DSM 1251) (Thiomicrospira denitrificans (strain ATCC 33889 / DSM 1251))).